The following is a 502-amino-acid chain: ATP synthase subunit alpha (502 aa).

169–176 is a binding site for ATP; it reads GDRQTGKT.

It belongs to the ATPase alpha/beta chains family. As to quaternary structure, F-type ATPases have 2 components, CF(1) - the catalytic core - and CF(0) - the membrane proton channel. CF(1) has five subunits: alpha(3), beta(3), gamma(1), delta(1), epsilon(1). CF(0) has three main subunits: a(1), b(2) and c(9-12). The alpha and beta chains form an alternating ring which encloses part of the gamma chain. CF(1) is attached to CF(0) by a central stalk formed by the gamma and epsilon chains, while a peripheral stalk is formed by the delta and b chains.

Its subcellular location is the cell membrane. It catalyses the reaction ATP + H2O + 4 H(+)(in) = ADP + phosphate + 5 H(+)(out). Produces ATP from ADP in the presence of a proton gradient across the membrane. The alpha chain is a regulatory subunit. The chain is ATP synthase subunit alpha from Streptococcus pyogenes serotype M18 (strain MGAS8232).